Reading from the N-terminus, the 84-residue chain is DNA-directed RNA polymerase subunit Rpo5 (84 aa).

Belongs to the archaeal Rpo5/eukaryotic RPB5 RNA polymerase subunit family. In terms of assembly, part of the 13-subunit RNA polymerase.

Its subcellular location is the cytoplasm. The catalysed reaction is RNA(n) + a ribonucleoside 5'-triphosphate = RNA(n+1) + diphosphate. Its function is as follows. DNA-dependent RNA polymerase (RNAP) catalyzes the transcription of DNA into RNA using the four ribonucleoside triphosphates as substrates. Functionally, reconstitution experiments show this subunit is required for basic activity. This Sulfolobus acidocaldarius (strain ATCC 33909 / DSM 639 / JCM 8929 / NBRC 15157 / NCIMB 11770) protein is DNA-directed RNA polymerase subunit Rpo5.